The primary structure comprises 727 residues: NHL repeat-containing protein 2 (727 aa).

Residues Arg-43 to Gln-198 form the Thioredoxin domain. 6 NHL repeats span residues Lys-207 to Asn-249, Asn-260 to Glu-302, Ile-330 to Leu-364, Phe-404 to Ile-434, Ala-456 to Lys-500, and Ala-513 to Glu-557.

Monomer.

It is found in the cytoplasm. It localises to the cytosol. In terms of biological role, required for normal embryonic development. The chain is NHL repeat-containing protein 2 (NHLRC2) from Gallus gallus (Chicken).